The primary structure comprises 910 residues: Seizure 6-like protein 2 (910 aa).

A signal peptide spans Met1 to Gly27. Residues Leu28–Asn844 lie on the Extracellular side of the membrane. The disordered stretch occupies residues Pro70–Glu152. A compositionally biased stretch (pro residues) spans Leu123–Arg145. A disulfide bridge links Cys173 with Cys202. Residues Cys173–Tyr286 form the CUB 1 domain. Asn222 is a glycosylation site (N-linked (GlcNAc...) asparagine). A Sushi 1 domain is found at Leu288 to Ala347. 12 disulfide bridges follow: Cys290-Cys330, Cys316-Cys345, Cys349-Cys376, Cys464-Cys508, Cys491-Cys523, Cys527-Cys553, Cys644-Cys686, Cys672-Cys699, Cys705-Cys747, Cys733-Cys764, Cys771-Cys813, and Cys799-Cys828. N-linked (GlcNAc...) asparagine glycosylation is found at Asn332, Asn373, Asn473, and Asn517. Residues Cys349–Phe459 form the CUB 2 domain. One can recognise a Sushi 2 domain in the interval Asp462–Ala525. The region spanning Cys527–Val638 is the CUB 3 domain. Sushi domains follow at residues Asp642 to Lys701, Met703 to Leu766, and Glu769 to Val830. The chain crosses the membrane as a helical span at residues Leu845–Ile865. At Tyr866–Ile910 the chain is on the cytoplasmic side.

Belongs to the SEZ6 family. In terms of tissue distribution, expressed exclusively in the brain, predominantly in the neurons. Wide expression in the gray matter of the brain with high levels in the olfactory bulb, anterior olfactory nuclei, hippocampal formation and cerebellar cortex. Detected diffusely and weakly in the white matter, such as the corpus callosum and cerebellar medulla. In the cerebellar cortex, intensely expressed in Purkinje cells (PC) and granule cells. Detected also in interneurons in the molecular layer. Up-regulated at two weeks after birth.

It localises to the cell membrane. It is found in the endoplasmic reticulum membrane. May contribute to specialized endoplasmic reticulum functions in neurons. This chain is Seizure 6-like protein 2 (Sez6l2), found in Mus musculus (Mouse).